A 156-amino-acid chain; its full sequence is Protein CURVATURE THYLAKOID 1C, chloroplastic (156 aa).

Residues 1–55 (MASISATLPSPLLLTQRKSNLTSIQKLPFSLTRGTNDLSPLSLTRNPSSISLMVK) constitute a chloroplast transit peptide. Topologically, residues 56-83 (ASGESSDSSTDLDVVSTIQNVWDKSEDR) are stromal. The helical transmembrane segment at 84–104 (LGLIGLGFAGIVALWASLNLI) threads the bilayer. The Lumenal portion of the chain corresponds to 105–109 (TAIDK). The helical transmembrane segment at 110-130 (LPVISSGFELVGILFSTWFTY) threads the bilayer. Topologically, residues 131–156 (RYLLFKPDRQELSKIVKKSVADILGQ) are stromal.

The protein belongs to the CURT family. In terms of assembly, homo- and heterodimers and trimers. Interacts with PSAD2.

Its subcellular location is the plastid. The protein localises to the chloroplast thylakoid membrane. In terms of biological role, determines thylakoid architecture by inducing membrane curvature. This chain is Protein CURVATURE THYLAKOID 1C, chloroplastic (CURT1C), found in Arabidopsis thaliana (Mouse-ear cress).